A 226-amino-acid polypeptide reads, in one-letter code: MIDAFFIAGTDTDVGKTVASKAILDALNMKGLRTAAYKPVAAGSEDKGEGVQNSDAIHLRAVANVELRYEEVNPYALLMPASPHIAAEAENVVIDYSVLSEGLASLKEKSDVVLVEGAGGWRVPVSKDDCLSTWVQQEKLPVVLVVGIKLGCLSHAMLTAEAIQHDGLEIIGWVANRVNPGTENYAEIIKMLEDKMPAPKLGEIPYMPSVKRKNMGKYIHLEALDN.

13–18 (DVGKTV) lines the ATP pocket. T17 contributes to the Mg(2+) binding site. Residue K38 is part of the active site. Residues D55, 116–119 (EGAG), and 176–177 (NR) contribute to the ATP site. 2 residues coordinate Mg(2+): D55 and E116.

Belongs to the dethiobiotin synthetase family. Homodimer. It depends on Mg(2+) as a cofactor.

It is found in the cytoplasm. The catalysed reaction is (7R,8S)-7,8-diammoniononanoate + CO2 + ATP = (4R,5S)-dethiobiotin + ADP + phosphate + 3 H(+). It functions in the pathway cofactor biosynthesis; biotin biosynthesis; biotin from 7,8-diaminononanoate: step 1/2. Functionally, catalyzes a mechanistically unusual reaction, the ATP-dependent insertion of CO2 between the N7 and N8 nitrogen atoms of 7,8-diaminopelargonic acid (DAPA, also called 7,8-diammoniononanoate) to form a ureido ring. The polypeptide is ATP-dependent dethiobiotin synthetase BioD (Aliivibrio fischeri (strain MJ11) (Vibrio fischeri)).